A 130-amino-acid polypeptide reads, in one-letter code: Protein ApaG (130 aa).

The ApaG domain maps to Ser3 to Arg127.

The chain is Protein ApaG from Brucella canis (strain ATCC 23365 / NCTC 10854 / RM-666).